A 159-amino-acid chain; its full sequence is Ribosome maturation factor RimP (159 aa).

The protein belongs to the RimP family.

Its subcellular location is the cytoplasm. Its function is as follows. Required for maturation of 30S ribosomal subunits. The sequence is that of Ribosome maturation factor RimP from Bordetella avium (strain 197N).